The sequence spans 417 residues: Serine hydroxymethyltransferase 2 (417 aa).

(6S)-5,6,7,8-tetrahydrofolate-binding positions include Leu-121 and 125–127 (GHL). Lys-230 is subject to N6-(pyridoxal phosphate)lysine. 355-357 (SPF) lines the (6S)-5,6,7,8-tetrahydrofolate pocket.

It belongs to the SHMT family. Homodimer. Pyridoxal 5'-phosphate serves as cofactor.

It is found in the cytoplasm. The catalysed reaction is (6R)-5,10-methylene-5,6,7,8-tetrahydrofolate + glycine + H2O = (6S)-5,6,7,8-tetrahydrofolate + L-serine. It functions in the pathway one-carbon metabolism; tetrahydrofolate interconversion. The protein operates within amino-acid biosynthesis; glycine biosynthesis; glycine from L-serine: step 1/1. Functionally, catalyzes the reversible interconversion of serine and glycine with tetrahydrofolate (THF) serving as the one-carbon carrier. This reaction serves as the major source of one-carbon groups required for the biosynthesis of purines, thymidylate, methionine, and other important biomolecules. Also exhibits THF-independent aldolase activity toward beta-hydroxyamino acids, producing glycine and aldehydes, via a retro-aldol mechanism. The protein is Serine hydroxymethyltransferase 2 of Pseudomonas fluorescens (strain ATCC BAA-477 / NRRL B-23932 / Pf-5).